The primary structure comprises 494 residues: Alpha-amylase (494 aa).

The signal sequence occupies residues 1-26 (MQISKAALLASLAALVYAQPVTLFKR). Residues C57 and C65 are joined by a disulfide bond. W110 is a binding site for substrate. Residue N148 coordinates Ca(2+). H149 serves as a coordination point for substrate. Residues C177 and C191 are joined by a disulfide bond. Residue D202 participates in Ca(2+) binding. An N-linked (GlcNAc...) asparagine glycan is attached at N224. R231 contributes to the substrate binding site. Positions 233, 237, and 257 each coordinate Ca(2+). D233 (nucleophile) is an active-site residue. 236-237 (KH) serves as a coordination point for substrate. E257 serves as the catalytic Proton donor. G261 contacts substrate. A disulfide bridge connects residues C267 and C310. Substrate contacts are provided by D324 and R371. The cysteines at positions 462 and 493 are disulfide-linked.

This sequence belongs to the glycosyl hydrolase 13 family. It depends on Ca(2+) as a cofactor.

The protein resides in the secreted. It catalyses the reaction Endohydrolysis of (1-&gt;4)-alpha-D-glucosidic linkages in polysaccharides containing three or more (1-&gt;4)-alpha-linked D-glucose units.. The chain is Alpha-amylase (ALP1) from Saccharomycopsis fibuligera (Yeast).